We begin with the raw amino-acid sequence, 211 residues long: uncharacterized protein (211 aa).

This is an uncharacterized protein from Methanocaldococcus jannaschii (strain ATCC 43067 / DSM 2661 / JAL-1 / JCM 10045 / NBRC 100440) (Methanococcus jannaschii).